A 358-amino-acid polypeptide reads, in one-letter code: MSVAPLKNDVFLRALLREPVPYTPIWLMRQAGRYLPEYNATRARAGSFMGLAQNPDYACEVTLQPLARYPLDAAILFSDILTVPHAMGLGLDFAPGEGPRFAHPVRDESDVAKLAVPDMDSLRYVFDAVRTIRRELDGRVPLIGFAGSPWTIACYMVEGRGSDDYRLIKSMLYGRPDLLHRILEINAEATRHYLNAQIDAGAQAVMLFDSWGGVLADGLFQQFSLAYTRRVVEGLTREREGRRVPVIVFTKGGGQWLEEIAACGCDAVGLDWTVNLGTARRRVADAVALQGNLDPMTLFGGAQAVRAEARRTLDAFGPVGKGGHVFNLGHGISQYSPPEVVSELVDEVHTYSRALHAG.

Substrate contacts are provided by residues 29–33 (RQAGR), F48, D79, Y155, S210, and H330.

The protein belongs to the uroporphyrinogen decarboxylase family. Homodimer.

The protein localises to the cytoplasm. The enzyme catalyses uroporphyrinogen III + 4 H(+) = coproporphyrinogen III + 4 CO2. The protein operates within porphyrin-containing compound metabolism; protoporphyrin-IX biosynthesis; coproporphyrinogen-III from 5-aminolevulinate: step 4/4. Catalyzes the decarboxylation of four acetate groups of uroporphyrinogen-III to yield coproporphyrinogen-III. This Bordetella bronchiseptica (strain ATCC BAA-588 / NCTC 13252 / RB50) (Alcaligenes bronchisepticus) protein is Uroporphyrinogen decarboxylase.